The chain runs to 384 residues: Dual specificity protein phosphatase 5 (384 aa).

The Rhodanese domain occupies 19–141; sequence AAARCVVLDC…FYSEYPECCV (123 aa). Residues 53–74 carry the Nuclear localization signal motif; it reads RRARGGAVSARYVLPDEAARAR. In terms of domain architecture, Tyrosine-protein phosphatase spans 178–319; that stretch reads GPVEILPFLY…LLQYESEILP (142 aa). Residue Cys263 is the Phosphocysteine intermediate of the active site.

It belongs to the protein-tyrosine phosphatase family. Non-receptor class dual specificity subfamily.

It is found in the nucleus. The enzyme catalyses O-phospho-L-tyrosyl-[protein] + H2O = L-tyrosyl-[protein] + phosphate. It carries out the reaction O-phospho-L-seryl-[protein] + H2O = L-seryl-[protein] + phosphate. It catalyses the reaction O-phospho-L-threonyl-[protein] + H2O = L-threonyl-[protein] + phosphate. Functionally, dual specificity protein phosphatase; active with phosphotyrosine, phosphoserine and phosphothreonine residues. The highest relative activity is toward ERK1. This is Dual specificity protein phosphatase 5 (DUSP5) from Homo sapiens (Human).